The sequence spans 385 residues: S-adenosylmethionine synthase (385 aa).

Histidine 16 provides a ligand contact to ATP. Position 18 (aspartate 18) interacts with Mg(2+). Glutamate 44 lines the K(+) pocket. L-methionine-binding residues include glutamate 57 and glutamine 100. The segment at 100–110 is flexible loop; the sequence is QSPDINQGVDR. ATP contacts are provided by residues 164–166, 230–231, aspartate 239, 245–246, alanine 262, and lysine 266; these read DGK, KF, and RK. Residue aspartate 239 participates in L-methionine binding. Lysine 270 provides a ligand contact to L-methionine.

It belongs to the AdoMet synthase family. Homotetramer; dimer of dimers. Mg(2+) serves as cofactor. The cofactor is K(+).

It localises to the cytoplasm. The catalysed reaction is L-methionine + ATP + H2O = S-adenosyl-L-methionine + phosphate + diphosphate. It participates in amino-acid biosynthesis; S-adenosyl-L-methionine biosynthesis; S-adenosyl-L-methionine from L-methionine: step 1/1. Functionally, catalyzes the formation of S-adenosylmethionine (AdoMet) from methionine and ATP. The overall synthetic reaction is composed of two sequential steps, AdoMet formation and the subsequent tripolyphosphate hydrolysis which occurs prior to release of AdoMet from the enzyme. The polypeptide is S-adenosylmethionine synthase (Helicobacter pylori (strain HPAG1)).